Here is a 121-residue protein sequence, read N- to C-terminus: Small ribosomal subunit protein uS11 (121 aa).

This sequence belongs to the universal ribosomal protein uS11 family. As to quaternary structure, part of the 30S ribosomal subunit. Interacts with proteins S7 and S18. Binds to IF-3.

In terms of biological role, located on the platform of the 30S subunit, it bridges several disparate RNA helices of the 16S rRNA. Forms part of the Shine-Dalgarno cleft in the 70S ribosome. This is Small ribosomal subunit protein uS11 from Ureaplasma parvum serovar 3 (strain ATCC 27815 / 27 / NCTC 11736).